The following is a 113-amino-acid chain: Ribonuclease P protein component (113 aa).

Belongs to the RnpA family. Consists of a catalytic RNA component (M1 or rnpB) and a protein subunit.

The catalysed reaction is Endonucleolytic cleavage of RNA, removing 5'-extranucleotides from tRNA precursor.. In terms of biological role, RNaseP catalyzes the removal of the 5'-leader sequence from pre-tRNA to produce the mature 5'-terminus. It can also cleave other RNA substrates such as 4.5S RNA. The protein component plays an auxiliary but essential role in vivo by binding to the 5'-leader sequence and broadening the substrate specificity of the ribozyme. This Finegoldia magna (strain ATCC 29328 / DSM 20472 / WAL 2508) (Peptostreptococcus magnus) protein is Ribonuclease P protein component.